Here is a 307-residue protein sequence, read N- to C-terminus: MRIVFAGTPEFAVSSLRAAARHHEVVAVYTQPDRPAGRGRGLAPSPVKLEAVARGIPVYQPESLKDEAAQQQLRDLQPDLMVVVAYGLILPKAVLAIPTHGCWNVHASLLPRWRGAAPIQRAIQAGDTKTGVCLMQMEAGLDTGPVLLHQELPIATTDTGGQLHDKLAELGAQVLSDGLGLLRAGIKPVARPQPEQGVTYAHKLDKAEARLDWVLDAGALARTVRAFNPWPIAEASLAGERVRIHGAVALDLAHGQAPGTVLAASRDGIDIACGQGALRLRVLQREGGKAITAADYLNARRDLRVGA.

A (6S)-5,6,7,8-tetrahydrofolate-binding site is contributed by 108 to 111 (SLLP).

Belongs to the Fmt family.

It carries out the reaction L-methionyl-tRNA(fMet) + (6R)-10-formyltetrahydrofolate = N-formyl-L-methionyl-tRNA(fMet) + (6S)-5,6,7,8-tetrahydrofolate + H(+). Functionally, attaches a formyl group to the free amino group of methionyl-tRNA(fMet). The formyl group appears to play a dual role in the initiator identity of N-formylmethionyl-tRNA by promoting its recognition by IF2 and preventing the misappropriation of this tRNA by the elongation apparatus. The protein is Methionyl-tRNA formyltransferase of Stenotrophomonas maltophilia (strain R551-3).